The primary structure comprises 92 residues: Acylphosphatase (92 aa).

A disulfide bond links Cys-5 and Cys-49. Positions Cys-5–Arg-92 constitute an Acylphosphatase-like domain. Active-site residues include Arg-20 and Asn-38.

It belongs to the acylphosphatase family.

It catalyses the reaction an acyl phosphate + H2O = a carboxylate + phosphate + H(+). This chain is Acylphosphatase, found in Escherichia coli O6:H1 (strain CFT073 / ATCC 700928 / UPEC).